The sequence spans 588 residues: Proteasome-associated ATPase (588 aa).

The segment covering Met-1 to Arg-10 has biased composition (basic and acidic residues). A disordered region spans residues Met-1–Ala-22. Positions Arg-47–Pro-94 form a coiled coil. Residue Gly-276–Leu-281 coordinates ATP. A docks into pockets in the proteasome alpha-ring region spans residues Tyr-587 to Leu-588.

The protein belongs to the AAA ATPase family. In terms of assembly, homohexamer. Assembles into a hexameric ring structure that caps the 20S proteasome core. Strongly interacts with the prokaryotic ubiquitin-like protein Pup through a hydrophobic interface; the interacting region of ARC lies in its N-terminal coiled-coil domain. There is one Pup binding site per ARC hexamer ring. Upon ATP-binding, the C-terminus of ARC interacts with the alpha-rings of the proteasome core, possibly by binding to the intersubunit pockets.

Its pathway is protein degradation; proteasomal Pup-dependent pathway. Its function is as follows. ATPase which is responsible for recognizing, binding, unfolding and translocation of pupylated proteins into the bacterial 20S proteasome core particle. May be essential for opening the gate of the 20S proteasome via an interaction with its C-terminus, thereby allowing substrate entry and access to the site of proteolysis. Thus, the C-termini of the proteasomal ATPase may function like a 'key in a lock' to induce gate opening and therefore regulate proteolysis. In Streptomyces griseus subsp. griseus (strain JCM 4626 / CBS 651.72 / NBRC 13350 / KCC S-0626 / ISP 5235), this protein is Proteasome-associated ATPase.